The following is a 123-amino-acid chain: Probable cyclase otaY (123 aa).

It belongs to the aurE cyclase family.

It functions in the pathway mycotoxin biosynthesis. In terms of biological role, probable cyclase; part of the gene cluster that mediates the biosynthesis of ochratoxin A (OTA), a mycotoxin composed of a chlorinated type I polyketide dihydroisocoumarin moiety linked to L-phenylalanine, and demonstrated to have nephrotoxic, immunotoxic, genotoxic, neurotoxic, and teratogenic properties. OtaY is probably involved in the polyketide cyclization. The pathway begins with the highly reducing polyketide synthase otaA that catalyzes the formation of the isocoumarin group during the initial stages of biosynthesis, starting from one acetate and 4 malonate units, to originate the characteristic pentaketide skeleton 7-methylmellein (7-MM) of the OTA molecule. The newly identified cyclase otaY might be involved in the polyketide cyclization reaction during the initial steps of the OTA biosynthesis. 7-MM is then oxidized into 7-carboxymellein (also called ochratoxin beta) by the cytochrome P450 monooxygenase otaC. The NRPS encoded by the otaB gene is involved in the linking of phenylalanine to the dihydroisocoumarin ring. The reaction catalyzed by NRPS results in the production of ochratoxin B (OTB), which is the non-chlorinated analog of OTA and which subsequently serves as the substrate of the halogenase otaD for chlorination activity to form the final molecular structure of OTA, containing a chlorine atom in the C-5 position of the molecule. In Aspergillus carbonarius (strain ITEM 5010), this protein is Probable cyclase otaY.